The following is a 163-amino-acid chain: F-box protein At2g35280 (163 aa).

The 50-residue stretch at isoleucine 8–leucine 57 folds into the F-box domain.

The sequence is that of F-box protein At2g35280 from Arabidopsis thaliana (Mouse-ear cress).